Consider the following 356-residue polypeptide: MSIVTITDLARENVRNLTPYQSARRLGGNGDVWLNANEYPTAVEFQLTQQTLNRYPECQPKAVIENYAQYAGVKPEQVLVSRGADEGIELLIRAFCEPGKDAILYCPPTYGMYGVSAETIGVECRTVPTLDNWQLDLQGISDKLEGVKVVYVCSPNNPTGQLINPQDFRTLLELTRGKAIVVADEAYIEFCPQASLAGWLAEYPHLAILRTLSKAFALAGLRCGFTLANEEVINLLMKVIAPYPLSTPVADIAAQALSPQGIVAMRERVAQIIAERECLIAALKEIPCVEQVFDSETNYILARFKASSAVFKSLWDQGIILRDQNKQPSLSGCLRITVGTREESQRVIDALRAEQV.

Lys214 bears the N6-(pyridoxal phosphate)lysine mark.

It belongs to the class-II pyridoxal-phosphate-dependent aminotransferase family. Histidinol-phosphate aminotransferase subfamily. Homodimer. It depends on pyridoxal 5'-phosphate as a cofactor.

It carries out the reaction L-histidinol phosphate + 2-oxoglutarate = 3-(imidazol-4-yl)-2-oxopropyl phosphate + L-glutamate. Its pathway is amino-acid biosynthesis; L-histidine biosynthesis; L-histidine from 5-phospho-alpha-D-ribose 1-diphosphate: step 7/9. The chain is Histidinol-phosphate aminotransferase from Shigella boydii serotype 4 (strain Sb227).